The sequence spans 138 residues: Calmodulin-beta (138 aa).

EF-hand domains are found at residues 1-32 (EFKE…LGQN), 33-68 (PTEA…KMKE), 70-105 (DSEE…LGEK), and 106-138 (LTDE…MTSK). Residues aspartate 10, aspartate 12, aspartate 14, threonine 16, glutamate 21, aspartate 46, aspartate 48, asparagine 50, threonine 52, glutamate 57, aspartate 83, aspartate 85, asparagine 87, glutamate 94, aspartate 119, aspartate 121, aspartate 123, glutamine 125, and glutamate 130 each contribute to the Ca(2+) site.

It belongs to the calmodulin family.

In terms of biological role, calmodulin mediates the control of a large number of enzymes, ion channels and other proteins by Ca(2+). Among the enzymes to be stimulated by the calmodulin-Ca(2+) complex are a number of protein kinases and phosphatases. This is Calmodulin-beta from Arbacia punctulata (Punctuate sea urchin).